A 513-amino-acid chain; its full sequence is Steroid (22S)-hydroxylase (513 aa).

Residues 8–28 form a helical membrane-spanning segment; it reads TLLPLLLLPSLLSLLLFLILL. A disordered region spans residues 252-277; the sequence is DIKEEDQEEEEVKTEDEAEMSKSDHV. Residues 254–269 are compositionally biased toward acidic residues; sequence KEEDQEEEEVKTEDEA. Cys-462 serves as a coordination point for heme.

This sequence belongs to the cytochrome P450 family. Requires heme as cofactor. Expressed in stems, leaves, shoots, and roots, with a higher expression in siliques and apical shoots.

The protein resides in the membrane. The enzyme catalyses a C27-steroid + reduced [NADPH--hemoprotein reductase] + O2 = a (22S)-22-hydroxy C27-steroid + oxidized [NADPH--hemoprotein reductase] + H2O + H(+). The catalysed reaction is a C28-steroid + reduced [NADPH--hemoprotein reductase] + O2 = a (22S)-22-hydroxy C28-steroid + oxidized [NADPH--hemoprotein reductase] + H2O + H(+). It catalyses the reaction a C29-steroid + reduced [NADPH--hemoprotein reductase] + O2 = a (22S)-22-hydroxy C29-steroid + oxidized [NADPH--hemoprotein reductase] + H2O + H(+). It carries out the reaction cholesterol + reduced [NADPH--hemoprotein reductase] + O2 = (22S)-22-hydroxycholesterol + oxidized [NADPH--hemoprotein reductase] + H2O + H(+). The enzyme catalyses cholestanol + reduced [NADPH--hemoprotein reductase] + O2 = (22S)-22-hydroxycholestanol + oxidized [NADPH--hemoprotein reductase] + H2O + H(+). The catalysed reaction is campestanol + reduced [NADPH--hemoprotein reductase] + O2 = 6-deoxycathasterone + oxidized [NADPH--hemoprotein reductase] + H2O + H(+). It catalyses the reaction campesterol + reduced [NADPH--hemoprotein reductase] + O2 = (22S)-22-hydroxycampesterol + oxidized [NADPH--hemoprotein reductase] + H2O + H(+). It carries out the reaction 6-oxocampestanol + reduced [NADPH--hemoprotein reductase] + O2 = cathasterone + oxidized [NADPH--hemoprotein reductase] + H2O + H(+). The enzyme catalyses sitosterol + reduced [NADPH--hemoprotein reductase] + O2 = (22S)-22-hydroxysitosterol + oxidized [NADPH--hemoprotein reductase] + H2O + H(+). It functions in the pathway plant hormone biosynthesis; brassinosteroid biosynthesis. Catalyzes the C22-alpha-hydroxylation step in brassinosteroids biosynthesis. Converts campesterol (CR) to (22S)-22-hydroxycampesterol (22-OHCR, 22-hydroxyCR), campestanol (CN) to 6-deoxycathasterone (6-deoxoCT), and 6-oxocampestanol (6-oxoCN) to cathasterone (CT). Can also use cholesterol and cholestanol as substrates. This Arabidopsis thaliana (Mouse-ear cress) protein is Steroid (22S)-hydroxylase.